Here is a 127-residue protein sequence, read N- to C-terminus: Large ribosomal subunit protein bL12 (127 aa).

Belongs to the bacterial ribosomal protein bL12 family. In terms of assembly, homodimer. Part of the ribosomal stalk of the 50S ribosomal subunit. Forms a multimeric L10(L12)X complex, where L10 forms an elongated spine to which 2 to 4 L12 dimers bind in a sequential fashion. Binds GTP-bound translation factors.

Functionally, forms part of the ribosomal stalk which helps the ribosome interact with GTP-bound translation factors. Is thus essential for accurate translation. This is Large ribosomal subunit protein bL12 from Nitratiruptor sp. (strain SB155-2).